A 505-amino-acid polypeptide reads, in one-letter code: Glutamate--tRNA ligase (505 aa).

Residues 12 to 22 (PSPTGALHIGG) carry the 'HIGH' region motif. Residues 260-264 (KLSKR) carry the 'KMSKS' region motif. Position 263 (Lys-263) interacts with ATP.

Belongs to the class-I aminoacyl-tRNA synthetase family. Glutamate--tRNA ligase type 1 subfamily. In terms of assembly, monomer.

The protein resides in the cytoplasm. It carries out the reaction tRNA(Glu) + L-glutamate + ATP = L-glutamyl-tRNA(Glu) + AMP + diphosphate. Catalyzes the attachment of glutamate to tRNA(Glu) in a two-step reaction: glutamate is first activated by ATP to form Glu-AMP and then transferred to the acceptor end of tRNA(Glu). This is Glutamate--tRNA ligase from Bacteroides fragilis (strain ATCC 25285 / DSM 2151 / CCUG 4856 / JCM 11019 / LMG 10263 / NCTC 9343 / Onslow / VPI 2553 / EN-2).